An 82-amino-acid chain; its full sequence is Exodeoxyribonuclease 7 small subunit (82 aa).

This sequence belongs to the XseB family. Heterooligomer composed of large and small subunits.

The protein localises to the cytoplasm. The enzyme catalyses Exonucleolytic cleavage in either 5'- to 3'- or 3'- to 5'-direction to yield nucleoside 5'-phosphates.. Bidirectionally degrades single-stranded DNA into large acid-insoluble oligonucleotides, which are then degraded further into small acid-soluble oligonucleotides. This chain is Exodeoxyribonuclease 7 small subunit, found in Coxiella burnetii (strain CbuG_Q212) (Coxiella burnetii (strain Q212)).